A 479-amino-acid chain; its full sequence is ATP synthase subunit beta (479 aa).

Position 153–160 (153–160 (GGAGVGKT)) interacts with ATP.

It belongs to the ATPase alpha/beta chains family. F-type ATPases have 2 components, CF(1) - the catalytic core - and CF(0) - the membrane proton channel. CF(1) has five subunits: alpha(3), beta(3), gamma(1), delta(1), epsilon(1). CF(0) has three main subunits: a(1), b(2) and c(9-12). The alpha and beta chains form an alternating ring which encloses part of the gamma chain. CF(1) is attached to CF(0) by a central stalk formed by the gamma and epsilon chains, while a peripheral stalk is formed by the delta and b chains.

The protein localises to the cell membrane. It carries out the reaction ATP + H2O + 4 H(+)(in) = ADP + phosphate + 5 H(+)(out). Its activity is regulated as follows. Increases 2-fold following exposure to low pH. Functionally, produces ATP from ADP in the presence of a proton gradient across the membrane. The catalytic sites are hosted primarily by the beta subunits. This is ATP synthase subunit beta from Lactobacillus acidophilus (strain ATCC 700396 / NCK56 / N2 / NCFM).